We begin with the raw amino-acid sequence, 510 residues long: NAD(P)H-quinone oxidoreductase subunit 2 B, chloroplastic (510 aa).

Helical transmembrane passes span 24–44 (LLLF…GLIL), 57–77 (IPWL…ALLF), 99–119 (IFQF…VEYI), 124–144 (MAIT…MFLC), 150–170 (ITIF…SGYT), 183–203 (YLLM…WLYG), 227–247 (PGIS…LSPA), 295–315 (WHLL…LIAI), 323–343 (MLAY…IVGD), 347–367 (GYAS…GTFA), 395–415 (ALSS…AGFF), 418–438 (LHLF…IGLL), and 484–504 (MIVC…IIAI).

The protein belongs to the complex I subunit 2 family. NDH is composed of at least 16 different subunits, 5 of which are encoded in the nucleus.

Its subcellular location is the plastid. It localises to the chloroplast thylakoid membrane. The enzyme catalyses a plastoquinone + NADH + (n+1) H(+)(in) = a plastoquinol + NAD(+) + n H(+)(out). The catalysed reaction is a plastoquinone + NADPH + (n+1) H(+)(in) = a plastoquinol + NADP(+) + n H(+)(out). NDH shuttles electrons from NAD(P)H:plastoquinone, via FMN and iron-sulfur (Fe-S) centers, to quinones in the photosynthetic chain and possibly in a chloroplast respiratory chain. The immediate electron acceptor for the enzyme in this species is believed to be plastoquinone. Couples the redox reaction to proton translocation, and thus conserves the redox energy in a proton gradient. The chain is NAD(P)H-quinone oxidoreductase subunit 2 B, chloroplastic from Chloranthus spicatus (Chulantree).